The sequence spans 714 residues: Choline transporter-like protein 5 (714 aa).

The Cytoplasmic segment spans residues 1-33; that stretch reads MGRRSAAPTSPFGEPRKFDPKFKGPIGKRHCTD. Residues 34–54 form a helical membrane-spanning segment; that stretch reads VLCCIIFVVVILGYIALGVVA. At 55-237 the chain is on the extracellular side; the sequence is WIHGDPRKII…KIFEDYASSW (183 aa). N-linked (GlcNAc...) asparagine glycans are attached at residues N83, N132, N192, and N205. A helical transmembrane segment spans residues 238 to 258; the sequence is YWILIALFIAMVVSLLFLILL. The Cytoplasmic segment spans residues 259 to 261; it reads RFT. The helical transmembrane segment at 262–282 threads the bilayer; it reads AGVFFWIFIIGVIGVVGYGIW. Over 283–320 the chain is Extracellular; it reads HCFWEYDSLKGVPGADLTIYDIGLQTDFRVYLQLRQTW. The helical transmembrane segment at 321–341 threads the bilayer; it reads LAFMILLCIVEVIIILMLIFL. Residues 342-346 are Cytoplasmic-facing; sequence RNRIR. A helical transmembrane segment spans residues 347–367; that stretch reads IAIALLQEGSRAIGYIMSTLF. Topologically, residues 368 to 369 are extracellular; sequence YP. A helical membrane pass occupies residues 370–390; sequence IITFILIAICISYWAVTAVFM. The Cytoplasmic segment spans residues 391 to 455; that stretch reads ATSGEPIYKV…QYILIFQLCN (65 aa). Residues 456–476 traverse the membrane as a helical segment; it reads VFVFLWLVNFSIALGQCTLAG. Residues 477-510 are Extracellular-facing; that stretch reads AFASYYWAFKKPADIPACPLFSSFGRAIRYHTGS. A helical membrane pass occupies residues 511-531; sequence LALGSLILALVQFIRIILEYL. At 532–605 the chain is on the cytoplasmic side; sequence DHKLKASQNS…RVAVLDKVTD (74 aa). A helical transmembrane segment spans residues 606–626; sequence FLLFLGKVFVTGSVGVLAFFF. Residues 627–644 are Extracellular-facing; the sequence is FTRKIPVLTDEAPALNYY. Residues 645-665 traverse the membrane as a helical segment; the sequence is WVPLLTVLIGSYLIAHGFFSV. The Cytoplasmic segment spans residues 666 to 711; that stretch reads YAMCVDTLFLCFCEDLERNNGSSSKPYYMSPNLHRILGKKEILSKK.

It belongs to the CTL (choline transporter-like) family.

It is found in the cell membrane. It carries out the reaction choline(out) + n H(+)(in) = choline(in) + n H(+)(out). Choline/H+ antiporter. This chain is Choline transporter-like protein 5 (slc44a5), found in Xenopus tropicalis (Western clawed frog).